Reading from the N-terminus, the 348-residue chain is uncharacterized protein (348 aa).

Its subcellular location is the virion. This is an uncharacterized protein from Acanthamoeba polyphaga mimivirus (APMV).